The primary structure comprises 339 residues: Ribonucleoside-diphosphate reductase subunit beta (339 aa).

D87 and H121 together coordinate Fe cation. The active site involves Y125. Position 215 (H215) interacts with Fe cation.

The protein belongs to the ribonucleoside diphosphate reductase small chain family. Tetramer of two alpha and two beta subunits. Fe cation is required as a cofactor.

The enzyme catalyses a 2'-deoxyribonucleoside 5'-diphosphate + [thioredoxin]-disulfide + H2O = a ribonucleoside 5'-diphosphate + [thioredoxin]-dithiol. Functionally, provides the precursors necessary for DNA synthesis. Catalyzes the biosynthesis of deoxyribonucleotides from the corresponding ribonucleotides. This is Ribonucleoside-diphosphate reductase subunit beta (nrdF) from Mycoplasmoides gallisepticum (strain R(low / passage 15 / clone 2)) (Mycoplasma gallisepticum).